Consider the following 89-residue polypeptide: Small ribosomal subunit protein uS19 (89 aa).

The protein belongs to the universal ribosomal protein uS19 family.

Protein S19 forms a complex with S13 that binds strongly to the 16S ribosomal RNA. This chain is Small ribosomal subunit protein uS19, found in Azobacteroides pseudotrichonymphae genomovar. CFP2.